We begin with the raw amino-acid sequence, 330 residues long: Clp protease adapter protein ClpF, chloroplastic (330 aa).

The transit peptide at methionine 1–arginine 65 directs the protein to the chloroplast. Positions valine 66 to glutamate 138 are NTD, required for CLPS1-binding. Coiled-coil stretches lie at residues asparagine 112 to glycine 139 and alanine 175 to lysine 195. The UVR domain maps to glycine 153 to glutamate 188. Positions glutamate 203–glutamine 310 are yccV-like.

Binds to CLPC1 and CLPC2. Interacts with ClpS1; this interaction stimulates their association with ClpC. Associates with the Clp substrate HEMA1 (GluTR). As to expression, expressed constitutively in photosynthetic tissues such as leaves, stems and flowers, and, at low levels, in siliques.

It localises to the plastid. Its subcellular location is the chloroplast. Clp protease adapter that facilitates CLPS1 recruitment to ClpC chaperones thus forming a binary adapter for selective substrate recognition and delivery to plastid Clp protease system (CLPC). The polypeptide is Clp protease adapter protein ClpF, chloroplastic (Arabidopsis thaliana (Mouse-ear cress)).